The following is a 230-amino-acid chain: Ubiquitin carboxyl-terminal hydrolase isozyme L3 (230 aa).

The region spanning 5–229 (RWLPLEANPE…LRFNAIALSA (225 aa)) is the UCH catalytic domain. Residues 8–13 (PLEANP) are interaction with ubiquitin. Cysteine 95 acts as the Nucleophile in catalysis. Serine 130 is modified (phosphoserine). Residues 152-159 (AHEGQTEA) are interaction with ubiquitin. Crossover loop which restricts access of large ubiquitin adducts to the active site. The active-site Proton donor is the histidine 169. The segment at 219–224 (ELRFNA) is interaction with ubiquitin.

The protein belongs to the peptidase C12 family. As to quaternary structure, preferentially binds diubiquitin; the interaction does not hydrolyze diubiquitin but, in vitro, inhibits the hydrolyzing activity on other substrates.

The protein resides in the cytoplasm. It catalyses the reaction Thiol-dependent hydrolysis of ester, thioester, amide, peptide and isopeptide bonds formed by the C-terminal Gly of ubiquitin (a 76-residue protein attached to proteins as an intracellular targeting signal).. With respect to regulation, inhibited by monoubiquitin and diubiquitin. Functionally, deubiquitinating enzyme (DUB) that controls levels of cellular ubiquitin through processing of ubiquitin precursors and ubiquitinated proteins. Thiol protease that recognizes and hydrolyzes a peptide bond at the C-terminal glycine of either ubiquitin or NEDD8. Has a 10-fold preference for Arg and Lys at position P3''. Deubiquitinates ENAC in apical compartments, thereby regulating apical membrane recycling. Indirectly increases the phosphorylation of IGFIR, AKT and FOXO1 and promotes insulin-signaling and insulin-induced adipogenesis. Required for stress-response retinal, skeletal muscle and germ cell maintenance. May be involved in working memory. Can hydrolyze UBB(+1), a mutated form of ubiquitin which is not effectively degraded by the proteasome. The sequence is that of Ubiquitin carboxyl-terminal hydrolase isozyme L3 (UCHL3) from Bos taurus (Bovine).